The primary structure comprises 451 residues: Phosphoglucosamine mutase (451 aa).

The active-site Phosphoserine intermediate is serine 101. Mg(2+) is bound by residues serine 101, aspartate 240, aspartate 242, and aspartate 244. Serine 101 is modified (phosphoserine).

The protein belongs to the phosphohexose mutase family. The cofactor is Mg(2+). Activated by phosphorylation.

It carries out the reaction alpha-D-glucosamine 1-phosphate = D-glucosamine 6-phosphate. Its function is as follows. Catalyzes the conversion of glucosamine-6-phosphate to glucosamine-1-phosphate. The protein is Phosphoglucosamine mutase of Streptococcus pyogenes serotype M2 (strain MGAS10270).